Here is a 953-residue protein sequence, read N- to C-terminus: MGKQVLDSGWLAARSTELELTGVQLTTTRPPSGTSAPWIEAVVPGTVLGTLLKNKLVPDPFYGLNNEGILDIYDSGREYYTFWFFKSFECKLSENQHVSLNFRAINYSAEVYLNGHKEILPKGMFRRHSIDITDILHPDGKNMLAVLVHPPDHPGQIPPEGGQGGDHEIGKDVATQYVEGWDWMAPIRDRNTGIWDEVSLYTSGPVKIADVHLVSSFFDMFRRAYLHSTVELENKSSWRAECSLTILVTTELDGDFNLIEYHQTHELSIPPESVIQYTLPPLFFYKPNLWWPNGMGKQSLYNVEITIAVKGFGDSDSWNNKFGFRQIESAIDEATGGRLFKVNGQRVFIRGGNWILSDGLLRLSKKRYMTDIKFHADMNFNMIRCWGGGLAERPEFYHYCDIYGLLVWQEFWITGDCDGRGIPVSNPNGPLDHALFLHCARDTIKLLRNHASLALWVGGNEQIPPEDINSALKNDLKLHPFFKHNGVTVIGEDMLSETEDPSQYLDGTRVYIQGSMWEGFANGKGDFTDGPYEIQNPEDFFKDDFYSYGFNPEVGSVGVPVAATIRATMPPEGWQIPLFKRLSDGFIEEVPNPIWEYHKYISYSKPGKVHDQIVLYGQPTNLDDFCEKAQLVNYVQYRALLEGWTSRMWTKYTGVLIWKTQNPWTGLRGQFYDHLHDQTAGFYGCRCAAEPVHVQLNLATYFIEVVNTTHEELSDVAIEVSVWDLDGTCPYYKVIENVLVSPKKVLPITELKYQGSKNAKPVYFVLLKLFRPSNTTILSRNFYWLRLPGTDFKLLEPYRAIEAPLKLTSEVNIVGSAYKIQMRVQNLSKNLNSESVNFLANDEKSDLSKKEGYISRICSGFKNSGTDSLRVVETKGTGSGVAFFLHFSVHAVKKDENEIEDLRILPVHYSDNYFSLVPGETTNISISFEVPHGVTPRVSLRGWNCSEEHYSVL.

E461 serves as the catalytic Proton donor. The active-site Nucleophile is the E553.

Belongs to the glycosyl hydrolase 2 family. Heterotrimer of 31 kDa, 28 kDa and 42 kDa subunits. In terms of processing, the mature enzyme is proteotically cleaved into 3 subunits of 31 kDa, 28 kDa and 42 kDa. In terms of tissue distribution, ubiquitously expressed.

The enzyme catalyses Hydrolysis of the alpha-D-mannosyl-(1-&gt;6)-beta-D-mannosyl-(1-&gt;4)-N-acetyl-beta-D-glucosaminyl-(1-&gt;4)-N-acetyl-beta-D-glucosaminyl sequence of glycoprotein to alpha-D-mannosyl-(1-&gt;6)-D-mannose and N-acetyl-beta-D-glucosaminyl-(1-&gt;4)-N-acetyl-beta-D-glucosaminyl sequences.. Its function is as follows. Glycosidase that specifically hydrolyzes the Man-beta-1,4-GlcNAc linkage in the trimannosyl core structure of N-glycans. Does not hydrolyzes pyridylamino derivatives sugar chains containing Man-alpha-1,3-Man-beta or Xylose-beta-1,2-Man-beta. In Lilium longiflorum (Trumpet lily), this protein is Mannosylglycoprotein endo-beta-mannosidase (EBM).